The chain runs to 290 residues: Glycine--tRNA ligase alpha subunit (290 aa).

It belongs to the class-II aminoacyl-tRNA synthetase family. As to quaternary structure, tetramer of two alpha and two beta subunits.

It is found in the cytoplasm. The catalysed reaction is tRNA(Gly) + glycine + ATP = glycyl-tRNA(Gly) + AMP + diphosphate. The polypeptide is Glycine--tRNA ligase alpha subunit (Nitratiruptor sp. (strain SB155-2)).